The chain runs to 89 residues: Gamma-bungarotoxin (89 aa).

Positions 1–21 are cleaved as a signal peptide; it reads MKTLLLTLVVVTIVCLDLGYT. 5 disulfides stabilise this stretch: C24–C45, C27–C32, C38–C66, C70–C81, and C82–C87. Positions 54–56 match the Cell attachment site motif; it reads RGD.

It belongs to the three-finger toxin family. Ancestral subfamily. Orphan group V sub-subfamily. As to expression, expressed by the venom gland.

The protein resides in the secreted. Its function is as follows. Exhibits M2 muscarinic acetylcholine receptor (CHRM2)-blocking activity, but has a weak binding activity toward nicotinic AChR. Moreover, it inhibits collagen-induced platelet aggregation. The polypeptide is Gamma-bungarotoxin (Bungarus multicinctus (Many-banded krait)).